Reading from the N-terminus, the 256-residue chain is 3-isopropylmalate dehydratase small subunit 2 (256 aa).

A chloroplast-targeting transit peptide spans 1–59 (MAYSLPTFPQALPCSSTKTSSSLATFRSPFLRFNGSTSLIPSSISITSRGTSSPTIIPR).

This sequence belongs to the LeuD family. In terms of assembly, heterodimer of the large LEUC/IIL1 subunit and the small LEUD (SSU1, SSU2 or SSU3) subunits. Expressed in vascular bundles of roots, cotyledons and rosette leaves. Expressed in stem vascular bundles which branche off into lateral inflorescences. Expressed in connective tissues in anthers. In young seedlings, expressed in cotyledon epidermal cells and vasculare bundles. In hypocotyls, expressed in parenchyma cells surrounding the vasculature and further peripheral cells. In seedling roots, expressed in cells along the vasculature. In roots of adult plants, expressed in cells closely associated with the stele. In flowering stalks, expressed in parenchyma cells associated with the phloem or the xylem. Expressed in the vasculature of sepals and petals.

Its subcellular location is the plastid. It is found in the chloroplast stroma. It carries out the reaction (2R,3S)-3-isopropylmalate = (2S)-2-isopropylmalate. It catalyses the reaction a 2-(omega-methylsulfanyl)alkylmalate = a 2-(omega-methylsulfanyl)alkylmaleate + H2O. The enzyme catalyses 2-(3-methylsulfanyl)propylmalate = 2-(2-methylsulfanyl)propylmaleate + H2O. The catalysed reaction is a 3-(omega-methylsulfanyl)alkylmalate = a 2-(omega-methylsulfanyl)alkylmaleate + H2O. It carries out the reaction 2-(2-methylsulfanyl)ethylmalate = 2-(2-methylsulfanyl)ethylmaleate + H2O. It catalyses the reaction 3-(2-methylsulfanyl)ethylmalate = 2-(2-methylsulfanyl)ethylmaleate + H2O. The enzyme catalyses 3-(3-methylsulfanyl)propylmalate = 2-(2-methylsulfanyl)propylmaleate + H2O. It participates in amino-acid biosynthesis; L-leucine biosynthesis; L-leucine from 3-methyl-2-oxobutanoate: step 2/4. Its function is as follows. Catalyzes the isomerization between 2-isopropylmalate and 3-isopropylmalate, via the formation of 2-isopropylmaleate. Functions redundantly with LEUD2 in the methionine chain elongation pathway of aliphatic glucosinolate formation. This is 3-isopropylmalate dehydratase small subunit 2 from Arabidopsis thaliana (Mouse-ear cress).